The primary structure comprises 543 residues: Carboxypeptidase Y homolog A (543 aa).

A signal peptide spans 1–17 (MRVLPATLLVGAATAAA). Residues 18-124 (PPFQQILGLP…KLEAYDLRVK (107 aa)) constitute a propeptide that is removed on maturation. Intrachain disulfides connect Cys-179/Cys-419, Cys-313/Cys-327, Cys-337/Cys-360, Cys-344/Cys-353, and Cys-382/Cys-389. Asn-210 carries N-linked (GlcNAc...) asparagine glycosylation. Residue Ser-266 is part of the active site. Asp-458 is an active-site residue. The N-linked (GlcNAc...) asparagine glycan is linked to Asn-509. Residue His-520 is part of the active site.

The protein belongs to the peptidase S10 family.

The protein resides in the vacuole. The enzyme catalyses Release of a C-terminal amino acid with broad specificity.. Its function is as follows. Vacuolar carboxypeptidase involved in degradation of small peptides. Digests preferentially peptides containing an aliphatic or hydrophobic residue in P1' position, as well as methionine, leucine or phenylalanine in P1 position of ester substrate. The polypeptide is Carboxypeptidase Y homolog A (cpyA) (Aspergillus fumigatus (strain ATCC MYA-4609 / CBS 101355 / FGSC A1100 / Af293) (Neosartorya fumigata)).